Consider the following 154-residue polypeptide: D-aminoacyl-tRNA deacylase (154 aa).

The Gly-cisPro motif, important for rejection of L-amino acids motif lies at 137-138 (GP).

It belongs to the DTD family. Homodimer.

The protein localises to the cytoplasm. It carries out the reaction glycyl-tRNA(Ala) + H2O = tRNA(Ala) + glycine + H(+). It catalyses the reaction a D-aminoacyl-tRNA + H2O = a tRNA + a D-alpha-amino acid + H(+). Its function is as follows. An aminoacyl-tRNA editing enzyme that deacylates mischarged D-aminoacyl-tRNAs. Also deacylates mischarged glycyl-tRNA(Ala), protecting cells against glycine mischarging by AlaRS. Acts via tRNA-based rather than protein-based catalysis; rejects L-amino acids rather than detecting D-amino acids in the active site. By recycling D-aminoacyl-tRNA to D-amino acids and free tRNA molecules, this enzyme counteracts the toxicity associated with the formation of D-aminoacyl-tRNA entities in vivo and helps enforce protein L-homochirality. This Thermomicrobium roseum (strain ATCC 27502 / DSM 5159 / P-2) protein is D-aminoacyl-tRNA deacylase.